Consider the following 235-residue polypeptide: Intron-encoded endonuclease I-SceI (235 aa).

This sequence belongs to the LAGLIDADG endonuclease family. Monomer. Requires Mg(2+) as cofactor.

The protein localises to the mitochondrion. Functionally, mitochondrial DNA endonuclease involved in intron homing. It introduces a specific double-strand break in the DNA of the 21S rRNA gene and thus mediates the insertion of an intron, containing its own coding sequence (group I intron), into an intronless gene. Specifically recognizes and cleaves the sequence 5'-TAGGGATAACAGGGTAAT-3'. The polypeptide is Intron-encoded endonuclease I-SceI (SCEI) (Saccharomyces cerevisiae (strain ATCC 204508 / S288c) (Baker's yeast)).